A 368-amino-acid polypeptide reads, in one-letter code: snRNA-activating protein complex subunit 1 (368 aa).

An SNAPC3-binding region spans residues 1 to 168 (MGTPPGLQTD…EEFKDPSDRV (168 aa)). The tract at residues 164-268 (PSDRVMKLIT…AESLAKIKSK (105 aa)) is SNAPC4-binding. Disordered regions lie at residues 224-257 (QQWHKDRKNPSLKSKTNDGEEKMEGNSQETERCE) and 275-368 (QASK…RRKH). Positions 238-257 (KTNDGEEKMEGNSQETERCE) are enriched in basic and acidic residues. Phosphoserine is present on residues Ser-289 and Ser-290.

As to quaternary structure, part of the SNAPc complex composed of 5 subunits: SNAPC1, SNAPC2, SNAPC3, SNAPC4 and SNAPC5. SNAPC1 interacts with SNAPC3, SNAPC4 and TBP.

It is found in the nucleus. Functionally, part of the SNAPc complex required for the transcription of both RNA polymerase II and III small-nuclear RNA genes. Binds to the proximal sequence element (PSE), a non-TATA-box basal promoter element common to these 2 types of genes. Recruits TBP and BRF2 to the U6 snRNA TATA box. The sequence is that of snRNA-activating protein complex subunit 1 (SNAPC1) from Homo sapiens (Human).